The sequence spans 489 residues: L-asparagine permease (489 aa).

Helical transmembrane passes span 38-58 (HVNM…GAGG), 62-82 (DAGP…FFVV), 113-133 (VAGW…ITAI), 150-170 (VLAL…VKIF), 175-195 (FWFA…GIFL), 223-243 (VMPV…LELV), 268-288 (VALF…SSLY), 302-322 (IGVP…AMSS), 357-377 (YGGI…NYLV), 382-402 (FEIV…IIMI), 426-446 (SPVT…LMWN), and 452-472 (RKTV…WFGV).

The protein belongs to the amino acid-polyamine-organocation (APC) superfamily. Amino acid transporter (AAT) (TC 2.A.3.1) family.

Its subcellular location is the cell membrane. The chain is L-asparagine permease (ansP) from Streptomyces coelicolor (strain ATCC BAA-471 / A3(2) / M145).